Reading from the N-terminus, the 297-residue chain is MNDLIDDFLHFLIVEKGLSANTIKAYERDLHYFVSYMDTSRTLTDPDTLERNDIVGFMAFARKEGKSPRSVARYIASLRSFFHYLMHDGKMSHDPMIQIETPKQAQSLPKVLNLDDVEKLLSSSDTSTPLGLRDQAMLEILYATGLRVTELVKLKMDDLHLQMGFIQTIGKGDKERIIPLGKTATTVLEQYLEEARPKLRRPKYRNDFVFLNHHGQGLTRQGFWKILKGIAKESGIEKPITPHTLRHSFATHLLENGADLRSVQELLGHADISTTQIYTHVTKLRLKDVYKQFHPRA.

One can recognise a Core-binding (CB) domain in the interval 1-86; sequence MNDLIDDFLH…SLRSFFHYLM (86 aa). The Tyr recombinase domain maps to 107 to 291; that stretch reads SLPKVLNLDD…TKLRLKDVYK (185 aa). Active-site residues include R147, K171, H243, R246, and H269. Y278 acts as the O-(3'-phospho-DNA)-tyrosine intermediate in catalysis.

The protein belongs to the 'phage' integrase family. XerD subfamily. Forms a cyclic heterotetrameric complex composed of two molecules of XerC and two molecules of XerD.

Its subcellular location is the cytoplasm. Functionally, site-specific tyrosine recombinase, which acts by catalyzing the cutting and rejoining of the recombining DNA molecules. The XerC-XerD complex is essential to convert dimers of the bacterial chromosome into monomers to permit their segregation at cell division. It also contributes to the segregational stability of plasmids. This is Tyrosine recombinase XerD from Listeria innocua serovar 6a (strain ATCC BAA-680 / CLIP 11262).